Here is a 297-residue protein sequence, read N- to C-terminus: Aspartate carbamoyltransferase catalytic subunit (297 aa).

Arginine 49 and threonine 50 together coordinate carbamoyl phosphate. Residue lysine 77 participates in L-aspartate binding. Carbamoyl phosphate contacts are provided by arginine 99, histidine 129, and glutamine 132. Arginine 162 and arginine 215 together coordinate L-aspartate. Carbamoyl phosphate contacts are provided by glycine 256 and proline 257.

The protein belongs to the aspartate/ornithine carbamoyltransferase superfamily. ATCase family. As to quaternary structure, heterododecamer (2C3:3R2) of six catalytic PyrB chains organized as two trimers (C3), and six regulatory PyrI chains organized as three dimers (R2).

It carries out the reaction carbamoyl phosphate + L-aspartate = N-carbamoyl-L-aspartate + phosphate + H(+). It functions in the pathway pyrimidine metabolism; UMP biosynthesis via de novo pathway; (S)-dihydroorotate from bicarbonate: step 2/3. In terms of biological role, catalyzes the condensation of carbamoyl phosphate and aspartate to form carbamoyl aspartate and inorganic phosphate, the committed step in the de novo pyrimidine nucleotide biosynthesis pathway. In Legionella pneumophila (strain Corby), this protein is Aspartate carbamoyltransferase catalytic subunit.